Here is a 901-residue protein sequence, read N- to C-terminus: HTH-type transcriptional regulator MalT (901 aa).

An ATP-binding site is contributed by 39-46 (SPAGYGKT). The 66-residue stretch at 829–894 (ELIRTSPLTQ…AAVQHAQKLL (66 aa)) folds into the HTH luxR-type domain. The segment at residues 853–872 (NEQIAGELEVAATTIKTHIR) is a DNA-binding region (H-T-H motif).

Belongs to the MalT family. As to quaternary structure, monomer in solution. Oligomerizes to an active state in the presence of the positive effectors ATP and maltotriose.

Activated by ATP and maltotriose, which are both required for DNA binding. Positively regulates the transcription of the maltose regulon whose gene products are responsible for uptake and catabolism of malto-oligosaccharides. Specifically binds to the promoter region of its target genes, recognizing a short DNA motif called the MalT box. This is HTH-type transcriptional regulator MalT from Escherichia coli O139:H28 (strain E24377A / ETEC).